The chain runs to 123 residues: MKAKLGFNRLSRKSSHRRALLKNMVISFLKHEKISSTKAKLFEVKRFSERLITKAKVDTVHNRRELSKFIHDKYILNKLFTKISPVFRQRSGGYTRMIKLGKRYGDAAEMAILELVEKPLKAE.

Belongs to the bacterial ribosomal protein bL17 family. Part of the 50S ribosomal subunit. Contacts protein L32.

This Borreliella afzelii (strain PKo) (Borrelia afzelii) protein is Large ribosomal subunit protein bL17.